The chain runs to 492 residues: Dynein regulatory complex subunit 2 (492 aa).

3 coiled-coil regions span residues 16–95, 256–318, and 373–401; these read LTEE…FERV, VQSA…AAQA, and LSEE…HDYS.

The protein belongs to the DRC2 family. Component of the nexin-dynein regulatory complex (N-DRC).

It localises to the cytoplasm. Its subcellular location is the cytoskeleton. It is found in the flagellum basal body. The protein localises to the cell projection. The protein resides in the cilium. It localises to the flagellum. Its subcellular location is the flagellum axoneme. Component of the nexin-dynein regulatory complex (N-DRC), a key regulator of ciliary/flagellar motility which maintains the alignment and integrity of the distal axoneme and regulates microtubule sliding in motile axonemes. Plays a critical role in the assembly of N-DRC and also stabilizes the assembly of multiple inner dynein arms and radial spokes. Coassembles with DRC1 to form a central scaffold needed for assembly of the N-DRC and its attachment to the outer doublet microtubules. This Danio rerio (Zebrafish) protein is Dynein regulatory complex subunit 2 (ccdc65).